We begin with the raw amino-acid sequence, 167 residues long: Probable chemoreceptor glutamine deamidase CheD (167 aa).

The protein belongs to the CheD family.

It catalyses the reaction L-glutaminyl-[protein] + H2O = L-glutamyl-[protein] + NH4(+). Functionally, probably deamidates glutamine residues to glutamate on methyl-accepting chemotaxis receptors (MCPs), playing an important role in chemotaxis. The protein is Probable chemoreceptor glutamine deamidase CheD of Moorella thermoacetica (strain ATCC 39073 / JCM 9320).